The following is a 594-amino-acid chain: UvrABC system protein C (594 aa).

The GIY-YIG domain occupies 13–99 (NSSGVYQYFD…IKQLKPKYNI (87 aa)). The region spanning 205 to 240 (DRLIKELELKMERLSSNLRFEEALIYRDRIAKIQKI) is the UVR domain.

Belongs to the UvrC family. In terms of assembly, interacts with UvrB in an incision complex.

It localises to the cytoplasm. Functionally, the UvrABC repair system catalyzes the recognition and processing of DNA lesions. UvrC both incises the 5' and 3' sides of the lesion. The N-terminal half is responsible for the 3' incision and the C-terminal half is responsible for the 5' incision. The polypeptide is UvrABC system protein C (Helicobacter pylori (strain G27)).